We begin with the raw amino-acid sequence, 769 residues long: Glutathione biosynthesis bifunctional protein GshAB (769 aa).

The glutamate--cysteine ligase stretch occupies residues 1 to 347 (MLDSFKEDPK…QLADENENNI (347 aa)). One can recognise an ATP-grasp domain in the interval 514–768 (KLVLAEHDIR…IGDKILDFLF (255 aa)). Position 541–599 (541–599 (SLFEDKQIVVKPKSTNYGWGISIFKNKFTLEDYQEALNIAFSYDSSVIIEEFIPGDEFR)) interacts with ATP. 3 residues coordinate Mg(2+): Asp-721, Glu-738, and Asn-740. Residues Asp-721, Glu-738, and Asn-740 each coordinate Mn(2+).

The protein in the N-terminal section; belongs to the glutamate--cysteine ligase type 1 family. Type 2 subfamily. As to quaternary structure, monomer. Mg(2+) serves as cofactor. It depends on Mn(2+) as a cofactor.

It catalyses the reaction L-cysteine + L-glutamate + ATP = gamma-L-glutamyl-L-cysteine + ADP + phosphate + H(+). It carries out the reaction gamma-L-glutamyl-L-cysteine + glycine + ATP = glutathione + ADP + phosphate + H(+). The protein operates within sulfur metabolism; glutathione biosynthesis; glutathione from L-cysteine and L-glutamate: step 1/2. It participates in sulfur metabolism; glutathione biosynthesis; glutathione from L-cysteine and L-glutamate: step 2/2. Its function is as follows. Synthesizes glutathione from L-glutamate and L-cysteine via gamma-L-glutamyl-L-cysteine. The polypeptide is Glutathione biosynthesis bifunctional protein GshAB (Listeria monocytogenes serotype 4b (strain F2365)).